A 260-amino-acid polypeptide reads, in one-letter code: GDNF family receptor alpha-4 (260 aa).

A signal peptide spans 1–23 (MAHCMESALLLLLLLGSASFTDG). N184 carries an N-linked (GlcNAc...) asparagine glycan. Residue T237 is the site of GPI-anchor amidated threonine attachment. The propeptide at 238 to 260 (AGCCFPRVSWLYALTALALQALL) is removed in mature form.

This sequence belongs to the GDNFR family. In terms of assembly, interacts with ARTN ligand and RET: forms a 2:2:2 ternary complex composed of ARTN ligand, GFRA3 and RET receptor. Interacts with SORL1. In terms of tissue distribution, expressed in many tissues including adrenal medulla, brain neurons, with highest levels in the cerebral cortex and hippocampus. Moderate levels found in the gut circular muscle and myenteric ganglia as well as in other peripheral ganglia, including the sensory dorsal root and trigeminal as well as superior cervical and sympathetic chain ganglia. Isoform a1, isoform a2, isoform b1 and isoform b2 are exclusively found in the thyroid, parthyroid and pituitary glands.

The protein localises to the cell membrane. It localises to the secreted. In terms of biological role, receptor for persephin (PSPN), a growth factor that exhibits neurotrophic activity on mesencephalic dopaminergic and motor neurons. Acts by binding to its coreceptor, GFRA4, leading to autophosphorylation and activation of the RET receptor. May be important in C-cell development and, in the postnatal development of the adrenal medulla. This is GDNF family receptor alpha-4 (Gfra4) from Mus musculus (Mouse).